The primary structure comprises 116 residues: G antigen 10 (116 aa).

The segment at 1-116 is disordered; the sequence is MSWRGRSTYR…PEEGEKQSQC (116 aa). A compositionally biased stretch (acidic residues) spans 31–44; sequence FSDEVEPATPEEGE. Composition is skewed to basic and acidic residues over residues 71–80 and 102–116; these read PEADSQEQVH and EEVK…QSQC.

This sequence belongs to the GAGE family.

This is G antigen 10 (GAGE10) from Homo sapiens (Human).